A 943-amino-acid polypeptide reads, in one-letter code: Isoleucine--tRNA ligase (943 aa).

The short motif at 58 to 68 (PYANGKIHIGH) is the 'HIGH' region element. E567 provides a ligand contact to L-isoleucyl-5'-AMP. Positions 608 to 612 (KMSKS) match the 'KMSKS' region motif. Residue K611 coordinates ATP. Residues C906, C909, C926, and C929 each contribute to the Zn(2+) site.

This sequence belongs to the class-I aminoacyl-tRNA synthetase family. IleS type 1 subfamily. In terms of assembly, monomer. The cofactor is Zn(2+).

It is found in the cytoplasm. It carries out the reaction tRNA(Ile) + L-isoleucine + ATP = L-isoleucyl-tRNA(Ile) + AMP + diphosphate. Its function is as follows. Catalyzes the attachment of isoleucine to tRNA(Ile). As IleRS can inadvertently accommodate and process structurally similar amino acids such as valine, to avoid such errors it has two additional distinct tRNA(Ile)-dependent editing activities. One activity is designated as 'pretransfer' editing and involves the hydrolysis of activated Val-AMP. The other activity is designated 'posttransfer' editing and involves deacylation of mischarged Val-tRNA(Ile). This Pseudomonas putida (strain W619) protein is Isoleucine--tRNA ligase.